A 166-amino-acid polypeptide reads, in one-letter code: Large ribosomal subunit protein uL10 (166 aa).

Belongs to the universal ribosomal protein uL10 family. As to quaternary structure, part of the ribosomal stalk of the 50S ribosomal subunit. The N-terminus interacts with L11 and the large rRNA to form the base of the stalk. The C-terminus forms an elongated spine to which L12 dimers bind in a sequential fashion forming a multimeric L10(L12)X complex.

Its function is as follows. Forms part of the ribosomal stalk, playing a central role in the interaction of the ribosome with GTP-bound translation factors. In Streptococcus pyogenes serotype M18 (strain MGAS8232), this protein is Large ribosomal subunit protein uL10 (rplJ).